The following is a 520-amino-acid chain: Ribonuclease Y (520 aa).

The helical transmembrane segment at 3–23 (FILVLCTVSSLFVGGGTGIFL) threads the bilayer. The KH domain maps to 209 to 272 (TVTAVTLPSE…QVAKMALERL (64 aa)). The region spanning 335–429 (VLRHSIEVAS…VQASDCLSGA (95 aa)) is the HD domain.

The protein belongs to the RNase Y family.

The protein resides in the cell membrane. In terms of biological role, endoribonuclease that initiates mRNA decay. The protein is Ribonuclease Y of Lawsonia intracellularis (strain PHE/MN1-00).